The chain runs to 167 residues: Putative defense protein Hdd11-like (167 aa).

Residues 1 to 18 form the signal peptide; the sequence is MMFTYVVAVASVVALTSA. Residues 19–167 enclose the Reelin domain; sequence YPTGAPPSAC…ESAPVKVLSH (149 aa). A disulfide bridge links C28 with C105.

Belongs to the insect defense protein family. In terms of tissue distribution, in larvae, high expression in the fat body and low expression in midgut, hemocytes and malpighian tubules. No expression in silkgland.

The protein resides in the secreted. Functionally, may have antimicrobial activity. The sequence is that of Putative defense protein Hdd11-like from Samia ricini (Indian eri silkmoth).